The following is a 426-amino-acid chain: Protein PHOSPHATE STARVATION RESPONSE 2 (426 aa).

Disordered stretches follow at residues Ala27–Ser81, Tyr96–Gly123, and Thr198–Thr247. A compositionally biased stretch (polar residues) spans Phe69–Ser81. Composition is skewed to low complexity over residues Tyr102–Ser119 and Ala205–Ser225. The span at Ser237 to Lys246 shows a compositional bias: polar residues. Residues Ser243–Tyr303 enclose the HTH myb-type domain. Positions Pro274–Arg299 form a DNA-binding region, H-T-H motif. 2 disordered regions span residues Arg302–Asp326 and Asp382–Arg426. Over residues Tyr303–Ile322 the composition is skewed to basic and acidic residues. Polar residues-rich tracts occupy residues Ala387 to Pro401 and Glu411 to Arg426.

As to quaternary structure, interacts (via C-terminus) with SPX4 (via N-terminus) in the presence of inositol polyphosphate. Interacts (via C-terminus) with SPX1 and SPX2 (via SPX domain). Interacts with RLI1 in the nucleus.

Its subcellular location is the nucleus. It is found in the cytoplasm. Its function is as follows. Transcription factor involved in phosphate starvation signaling. Binds to P1BS, an imperfect palindromic sequence 5'-GNATATNC-3', to promote the expression of inorganic phosphate (Pi) starvation-responsive genes. Functionally redundant with PHR1 and PHR3 in regulating Pi starvation response and Pi homeostasis. Involved in both systematic and local Pi-signaling pathways. Regulates several Pi transporters. PHR2 binding to DNA is repressed redundantly by SPX1, SPX2 and SPX4 in a PI-dependent manner. The DNA-binding activity is also repressed by SPX4. Involved in root growth under Pi deprivation. Involved in the modulation of Pi response and homeostasis together with RLI1; promotes RLI1 expression in response to nitrate availability, thus triggering the nitrate-induced phosphate response (NIPR). In Oryza sativa subsp. indica (Rice), this protein is Protein PHOSPHATE STARVATION RESPONSE 2.